The following is a 163-amino-acid chain: ATP synthase subunit b (163 aa).

Residues 9–29 (GLLIAQLINVVFVVWLLTTFL) traverse the membrane as a helical segment.

The protein belongs to the ATPase B chain family. F-type ATPases have 2 components, F(1) - the catalytic core - and F(0) - the membrane proton channel. F(1) has five subunits: alpha(3), beta(3), gamma(1), delta(1), epsilon(1). F(0) has four main subunits: a(1), b(2) and c(10-14). The alpha and beta chains form an alternating ring which encloses part of the gamma chain. F(1) is attached to F(0) by a central stalk formed by the gamma and epsilon chains, while a peripheral stalk is formed by the delta and b chains.

The protein resides in the cell membrane. Its function is as follows. F(1)F(0) ATP synthase produces ATP from ADP in the presence of a proton or sodium gradient. F-type ATPases consist of two structural domains, F(1) containing the extramembraneous catalytic core and F(0) containing the membrane proton channel, linked together by a central stalk and a peripheral stalk. During catalysis, ATP synthesis in the catalytic domain of F(1) is coupled via a rotary mechanism of the central stalk subunits to proton translocation. Component of the F(0) channel, it forms part of the peripheral stalk, linking F(1) to F(0). This Roseiflexus castenholzii (strain DSM 13941 / HLO8) protein is ATP synthase subunit b.